Reading from the N-terminus, the 237-residue chain is MCDSHQKEEDNANTSERALFFNYHEFSYSFYEDLGSEDAKPTEHDEDHKLCITHFPNVYAARGSAEFQVTRVVRVPRRFDESRSSLETPQFSTQLPGSEPAAIVGDDGTSFVRCGRYDIGDHVFGCSSVSPLSEYLSAAELAEVVHRVNGFLLREEGEVFGWRNLSGLLLDMLTGGLWSWVLGPLLSRPVFQESLALEQYVAQLNSPGGLLHERGVRLVLPRRSGCLSLDFVVPRPK.

The protein belongs to the ERF4 family. In terms of assembly, interacts with ERF2.

The protein localises to the endoplasmic reticulum membrane. The ERF2-SHR5 complex is a palmitoyltransferase specific for Ras proteins. Palmitoylates RAS2, which is required for its proper plasma membrane localization. The chain is Ras modification protein ERF4 (SHR5) from Saccharomyces cerevisiae (strain ATCC 204508 / S288c) (Baker's yeast).